The primary structure comprises 108 residues: Phosphoribosyl-ATP pyrophosphatase (108 aa).

This sequence belongs to the PRA-PH family.

The protein localises to the cytoplasm. The catalysed reaction is 1-(5-phospho-beta-D-ribosyl)-ATP + H2O = 1-(5-phospho-beta-D-ribosyl)-5'-AMP + diphosphate + H(+). It functions in the pathway amino-acid biosynthesis; L-histidine biosynthesis; L-histidine from 5-phospho-alpha-D-ribose 1-diphosphate: step 2/9. This chain is Phosphoribosyl-ATP pyrophosphatase, found in Dechloromonas aromatica (strain RCB).